The primary structure comprises 332 residues: Long form salivary protein D7L1 (332 aa).

The first 21 residues, 1–21 (MHSPKSFLLLAVVFVALRVTA), serve as a signal peptide directing secretion. 2 disulfides stabilise this stretch: Cys-40–Cys-77 and Cys-73–Cys-133. Trp-61 serves as a coordination point for leukotriene E4. Lys-176 serves as a coordination point for leukotriene E4. 3 disulfide bridges follow: Cys-184–Cys-219, Cys-200–Cys-331, and Cys-259–Cys-278. Residues Glu-185 and Arg-203 each coordinate noradrenaline. 2 residues coordinate noradrenaline: Asp-294 and Glu-297.

It belongs to the PBP/GOBP family. As to expression, female mosquito salivary gland (at protein level).

It localises to the secreted. In terms of biological role, modulates blood feeding of female mosquitoes on vertebrate species by binding and sequestering different mediators involved in the host response, such as biogenic amines and eicosanoids. Binds dopamine, serotonin, histamine, tryptamine, adrenaline, noradrenaline, leukotriene B4, leukotriene C4, leukotriene D4, leukotriene E4 and U-46619, a stable analog of thromboxane A2. Inhibits platelet aggregation induced by serotonin and low doses of thromboxane A2 analog U-46619 but not by high doses of U-46619, collagen or ADP. Prevents leukocyte recruitment. This is Long form salivary protein D7L1 from Aedes albopictus (Asian tiger mosquito).